The following is a 632-amino-acid chain: Bestrophin homolog 24 (632 aa).

The next 4 helical transmembrane spans lie at 28 to 48 (IWKA…ILSV), 83 to 103 (GFFV…IGFI), 234 to 254 (IMYP…CLLA), and 271 to 291 (LYFP…MKVA). Disordered regions lie at residues 491–516 (LSNK…EHPF) and 562–632 (ETEV…TKFE). The segment covering 563–602 (TEVKRDEKKKKEEELREEGDNGKEEKDNKEDKKEEQDRPS) has biased composition (basic and acidic residues). A compositionally biased stretch (basic residues) spans 623–632 (PHLRPPTKFE).

It belongs to the anion channel-forming bestrophin (TC 1.A.46) family. Calcium-sensitive chloride channel subfamily. In terms of assembly, forms oligomers.

Its subcellular location is the cell membrane. Forms chloride channels. In Caenorhabditis elegans, this protein is Bestrophin homolog 24 (best-24).